We begin with the raw amino-acid sequence, 123 residues long: Small ribosomal subunit protein uS12 (123 aa).

The disordered stretch occupies residues 1-21 (MPTIEQLVRKGRQAKPKKSKT). Over residues 9–20 (RKGRQAKPKKSK) the composition is skewed to basic residues.

This sequence belongs to the universal ribosomal protein uS12 family. In terms of assembly, part of the 30S ribosomal subunit. Contacts proteins S8 and S17. May interact with IF1 in the 30S initiation complex.

Its function is as follows. With S4 and S5 plays an important role in translational accuracy. Interacts with and stabilizes bases of the 16S rRNA that are involved in tRNA selection in the A site and with the mRNA backbone. Located at the interface of the 30S and 50S subunits, it traverses the body of the 30S subunit contacting proteins on the other side and probably holding the rRNA structure together. The combined cluster of proteins S8, S12 and S17 appears to hold together the shoulder and platform of the 30S subunit. In Bifidobacterium longum (strain NCC 2705), this protein is Small ribosomal subunit protein uS12.